We begin with the raw amino-acid sequence, 435 residues long: Histidine--tRNA ligase (435 aa).

Belongs to the class-II aminoacyl-tRNA synthetase family.

The protein localises to the cytoplasm. It carries out the reaction tRNA(His) + L-histidine + ATP = L-histidyl-tRNA(His) + AMP + diphosphate + H(+). This chain is Histidine--tRNA ligase (hisS), found in Aeropyrum pernix (strain ATCC 700893 / DSM 11879 / JCM 9820 / NBRC 100138 / K1).